The primary structure comprises 383 residues: Subtelomeric hrmA-associated cluster protein AFUB_078970 (383 aa).

2 disordered regions span residues 118 to 145 (NPVS…KDDD) and 249 to 318 (QATQ…SARP). Residues 119–134 (PVSEVPESPPSTVKSS) are compositionally biased toward low complexity. Residues 318-364 (PYSAAEDDILQTLVARGLAWEEIEKEFGLRFAKRTMRSLQMRWSRKL) enclose the Myb-like domain.

Its function is as follows. Myb-like domain-containing protein; part of the subtelomeric hrmA-associated cluster (HAC) containing genes that alter the hyphal surface (such as reduced total chitin or increased beta-glucan exposure) and perturb inter-hyphal interactions within the developing biofilms, resulting in a loss of vertically aligned polarized growing filaments. Consequently, this hypoxia-typic morphotype (called H-MORPH) with altered biofilm architecture leads to increased hypoxia fitness, increased host inflammation, rapid disease progression, and mortality in a murine model of invasive aspergillosis. The sequence is that of Subtelomeric hrmA-associated cluster protein AFUB_078970 from Aspergillus fumigatus (strain CBS 144.89 / FGSC A1163 / CEA10) (Neosartorya fumigata).